The chain runs to 261 residues: Claudin-18 (261 aa).

The Cytoplasmic segment spans residues 1-6 (MATTTC). Residues 7 to 27 (QVVGLLLSLLGLAGCIAATGM) traverse the membrane as a helical segment. Residues 28-80 (DMWSTQDLYDNPVTSVFQYEGLWRSCVQQSSGFTECRPYFTILGLPAMLQAVR) are Extracellular-facing. Residues 81–101 (ALMIVGIVLGVIGILVSIFAL) form a helical membrane-spanning segment. The Cytoplasmic segment spans residues 102–122 (KCIRIGSMDDSAKAKMTLTSG). A helical transmembrane segment spans residues 123 to 143 (IMFIISGVCAIIGVSVFANML). Residues 144 to 173 (VTNFWMSTANMYSGMGGMVQTVQTRYTFGA) are Extracellular-facing. A helical transmembrane segment spans residues 174-194 (ALFVGWIAGGLTLIGGVMMCI). Over 195 to 261 (ACRGLTPDDR…QSHPTKYDYV (67 aa)) the chain is Cytoplasmic. The tract at residues 195-261 (ACRGLTPDDR…QSHPTKYDYV (67 aa)) is required for role in regulation of RANKL-induced osteoclast differentiation. Ser214 is modified (phosphoserine). Residues 242-261 (DGGARTEDDEQSHPTKYDYV) are disordered.

This sequence belongs to the claudin family. As to quaternary structure, interacts with TJP2/ZO-2. Interacts with TJP1/ZO-1. Interacts with YAP1 (phosphorylated); the interaction sequesters YAP1 away from the nucleus and thereby restricts transcription of YAP1 target genes. Interacts with CLDN19. In terms of tissue distribution, expressed in the lung (at protein level).

The protein localises to the cell junction. It localises to the tight junction. Its subcellular location is the cell membrane. In terms of biological role, involved in alveolar fluid homeostasis via regulation of alveolar epithelial tight junction composition and therefore ion transport and solute permeability, potentially via downstream regulation of the actin cytoskeleton organization and beta-2-adrenergic signaling. Required for lung alveolarization and maintenance of the paracellular alveolar epithelial barrier. Acts to maintain epithelial progenitor cell proliferation and organ size, via regulation of YAP1 localization away from the nucleus and thereby restriction of YAP1 target gene transcription. Acts as a negative regulator of RANKL-induced osteoclast differentiation, potentially via relocation of TJP2/ZO-2 away from the nucleus, subsequently involved in bone resorption in response to calcium deficiency. Mediates the osteoprotective effects of estrogen, potentially via acting downstream of estrogen signaling independently of RANKL signaling pathways. Functionally, required for the formation of the gastric paracellular barrier via its role in tight junction formation, thereby involved in the response to gastric acidification. This Rattus norvegicus (Rat) protein is Claudin-18.